A 443-amino-acid polypeptide reads, in one-letter code: Trigger factor (443 aa).

One can recognise a PPIase FKBP-type domain in the interval 163 to 249 (KDAAIIDYQA…LKSLKEEILP (87 aa)).

Belongs to the FKBP-type PPIase family. Tig subfamily.

The protein resides in the cytoplasm. It carries out the reaction [protein]-peptidylproline (omega=180) = [protein]-peptidylproline (omega=0). Functionally, involved in protein export. Acts as a chaperone by maintaining the newly synthesized protein in an open conformation. Functions as a peptidyl-prolyl cis-trans isomerase. This chain is Trigger factor, found in Desulfosudis oleivorans (strain DSM 6200 / JCM 39069 / Hxd3) (Desulfococcus oleovorans).